Reading from the N-terminus, the 649-residue chain is Acetyl-coenzyme A synthetase (649 aa).

CoA contacts are provided by residues 190-193 (RGGR) and threonine 310. Residues 386-388 (GEP), 410-415 (DTWWQT), aspartate 499, and arginine 514 contribute to the ATP site. Position 522 (serine 522) interacts with CoA. Arginine 525 contacts ATP. Mg(2+) contacts are provided by valine 536, histidine 538, and valine 541. Arginine 583 contributes to the CoA binding site. Lysine 608 bears the N6-acetyllysine mark.

This sequence belongs to the ATP-dependent AMP-binding enzyme family. It depends on Mg(2+) as a cofactor. Acetylated. Deacetylation by the SIR2-homolog deacetylase activates the enzyme.

The enzyme catalyses acetate + ATP + CoA = acetyl-CoA + AMP + diphosphate. In terms of biological role, catalyzes the conversion of acetate into acetyl-CoA (AcCoA), an essential intermediate at the junction of anabolic and catabolic pathways. AcsA undergoes a two-step reaction. In the first half reaction, AcsA combines acetate with ATP to form acetyl-adenylate (AcAMP) intermediate. In the second half reaction, it can then transfer the acetyl group from AcAMP to the sulfhydryl group of CoA, forming the product AcCoA. This chain is Acetyl-coenzyme A synthetase, found in Methylorubrum extorquens (strain PA1) (Methylobacterium extorquens).